Here is a 647-residue protein sequence, read N- to C-terminus: Leucine-rich repeat transmembrane protein FLRT3 (647 aa).

Positions 1-28 (MITVPWSVFLIWTKIGLLLDMAPYSVAA) are cleaved as a signal peptide. Residues 29–526 (KPCPSVCRCD…KEPYKNSSVP (498 aa)) are Extracellular-facing. Residues 30 to 62 (PCPSVCRCDVGFIYCNDRDLTSIPTGIPEDATN) form the LRRNT domain. Disulfide bonds link C31/C37 and C35/C44. LRR repeat units follow at residues 58–82 (EDATNLFLQNNQINNAGIPSELKNL), 83–105 (RRVERIFLYHNSLDEFPTNLPKY), 107–126 (KELHLQENNIRTITYDSLSQ), 127–152 (IPYLEELHLDDNSVSAVSIEDGAFRD), 154–179 (IYLRLLFLSRNHLSTIPWGLPKTIEE), 181–197 (RLDDNRISTISELSLQD), 198–223 (LTNLKRLVLDGNLLNNHGLGDKVFMN), 225–246 (VNLTELSLVRNSLTAAPVNLPG), 247–269 (TNLRKLYLQENHINHVPPNAFSY), and 270–293 (LRQLYRLDMSNNNLSNLPQGVFDD). Residue N226 is glycosylated (N-linked (GlcNAc...) asparagine). Positions 305-356 (NPWHCGCKMKWVRDWLQSLPLKVNVRGLMCQAPEKVRGMAIKDLNAELFDCK) constitute an LRRCT domain. C309 and C334 are joined by a disulfide. The Fibronectin type-III domain occupies 404–502 (PVRKIITIFV…ECIETETAPL (99 aa)). Residues 527 to 547 (LAAIIGGAVALVALALLALVC) form a helical membrane-spanning segment. The Cytoplasmic segment spans residues 548–647 (WYVHRNGALF…GIPDSDHSHS (100 aa)). The segment at 620–647 (LYKNSHSESSSNRSYRDSGIPDSDHSHS) is disordered.

In terms of processing, N-glycosylated. Post-translationally, proteolytic cleavage in the juxtamembrane region gives rise to a soluble ectodomain. Cleavage is probably effected by a metalloprotease.

It localises to the cell membrane. Its subcellular location is the endoplasmic reticulum membrane. The protein localises to the cell junction. The protein resides in the focal adhesion. It is found in the secreted. It localises to the cell projection. Its subcellular location is the axon. The protein localises to the growth cone membrane. Functionally, modulates the structure and function of the apical ectodermal ridge (AER) that controls embryonic limb development. Functions in cell-cell adhesion, cell migration and axon guidance, exerting an attractive or repulsive role depending on its interaction partners. Plays a role in the spatial organization of brain neurons. Plays a role in vascular development. Plays a role in cell-cell adhesion via its interaction with latrophilins that are expressed at the surface of adjacent cells. Mediates axon attraction towards cells expressing NTN1. Mediates axon growth cone collapse and plays a repulsive role in neuron guidance via its interaction with UNC-5 family members. Plays a role in the regulation of the density of glutamaergic synapses. Plays a role in fibroblast growth factor-mediated signaling cascades. Required for normal morphogenesis during embryonic development, but not for normal embryonic patterning. The chain is Leucine-rich repeat transmembrane protein FLRT3 (FLRT3) from Gallus gallus (Chicken).